Here is a 353-residue protein sequence, read N- to C-terminus: N-methyltransferase (353 aa).

S-adenosyl-L-homocysteine is bound by residues Ser-171, Ala-195, Asp-218, Asp-238, and Lys-252. Asp-218 contacts S-adenosyl-L-methionine.

Belongs to the class I-like SAM-binding methyltransferase superfamily. Cation-independent O-methyltransferase family. In terms of assembly, homodimer. Expressed at high levels in all tissues.

The enzyme catalyses 3-methoxytyramine + S-adenosyl-L-methionine = N-methyl-3-methoxytyramine + S-adenosyl-L-homocysteine + H(+). It catalyses the reaction mescaline + S-adenosyl-L-methionine = N-methylmescaline + S-adenosyl-L-homocysteine + H(+). It carries out the reaction tyramine + S-adenosyl-L-methionine = N-methyltyramine + S-adenosyl-L-homocysteine + H(+). The catalysed reaction is 4-hydroxy-3,5-dimethoxyphenethylamine + S-adenosyl-L-methionine = N-methyl-4-hydroxy-3,5-dimethoxyphenethylamine + S-adenosyl-L-homocysteine + H(+). It functions in the pathway aromatic compound metabolism. The protein operates within alkaloid biosynthesis. Functionally, N-methyltransferase participating in the biosynthesis of natural products derived from phenylethylamine, including mescaline, a natural hallucinogen potentially used in psychotherapeutic treatments. Catalyzes the N-methylation of many substrates, including 3-methoxytyramine, 5-hydroxy-3,4-dimethoxyphenethylamine, 4-hydroxy-3,5-dimethoxyphenethylamine, tyramine and mescaline. The sequence is that of N-methyltransferase from Lophophora williamsii (Peyote).